Reading from the N-terminus, the 644-residue chain is Serine/threonine kinase YeaG (644 aa).

This sequence belongs to the PrkA family. In terms of assembly, monomer.

It localises to the cytoplasm. The catalysed reaction is L-seryl-[protein] + ATP = O-phospho-L-seryl-[protein] + ADP + H(+). It catalyses the reaction L-threonyl-[protein] + ATP = O-phospho-L-threonyl-[protein] + ADP + H(+). Its function is as follows. Kinase that plays a role in the adaptation to sustained nitrogen starvation. The chain is Serine/threonine kinase YeaG (yeaG) from Escherichia coli O157:H7.